The following is a 243-amino-acid chain: 1-(5-phosphoribosyl)-5-[(5-phosphoribosylamino)methylideneamino] imidazole-4-carboxamide isomerase (243 aa).

Asp10 (proton acceptor) is an active-site residue. Asp129 functions as the Proton donor in the catalytic mechanism.

It belongs to the HisA/HisF family.

Its subcellular location is the cytoplasm. The catalysed reaction is 1-(5-phospho-beta-D-ribosyl)-5-[(5-phospho-beta-D-ribosylamino)methylideneamino]imidazole-4-carboxamide = 5-[(5-phospho-1-deoxy-D-ribulos-1-ylimino)methylamino]-1-(5-phospho-beta-D-ribosyl)imidazole-4-carboxamide. Its pathway is amino-acid biosynthesis; L-histidine biosynthesis; L-histidine from 5-phospho-alpha-D-ribose 1-diphosphate: step 4/9. This is 1-(5-phosphoribosyl)-5-[(5-phosphoribosylamino)methylideneamino] imidazole-4-carboxamide isomerase from Saccharopolyspora erythraea (strain ATCC 11635 / DSM 40517 / JCM 4748 / NBRC 13426 / NCIMB 8594 / NRRL 2338).